Consider the following 197-residue polypeptide: uncharacterized protein (197 aa).

The signal sequence occupies residues 1-23 (MSARAPKELRLALPPCLLNRTFA). 2 N-linked (GlcNAc...) asparagine glycosylation sites follow: N19 and N26. Residues 24–61 (SPNASGSGNTGARGPGAGGSGTCITQVGQQLFQSFSST) lie on the Extracellular side of the membrane. A helical membrane pass occupies residues 62-82 (LVLIVLVTLIFCLIVLSLSTF). At 83–197 (HIHKRRMKKR…EGLLQTVVLS (115 aa)) the chain is on the cytoplasmic side. The tract at residues 94-180 (MQRAQEEYER…SSPQGAHAAS (87 aa)) is disordered. 2 stretches are compositionally biased toward basic and acidic residues: residues 96–107 (RAQEEYERDHCS) and 125–136 (HTKETRLERQPR). Residues 147–161 (SSSSSSSPGLLCQGP) show a composition bias toward low complexity. Residues 162–171 (CAPPPPPPAS) are compositionally biased toward pro residues.

The protein resides in the membrane. This is an uncharacterized protein from Macaca fascicularis (Crab-eating macaque).